A 244-amino-acid polypeptide reads, in one-letter code: Ureidoacrylate amidohydrolase RutB (244 aa).

The Proton acceptor role is filled by D38. K147 is a catalytic residue. Catalysis depends on C180, which acts as the Nucleophile.

The protein belongs to the isochorismatase family. RutB subfamily.

The catalysed reaction is (Z)-3-ureidoacrylate + H2O + H(+) = (Z)-3-aminoacrylate + NH4(+) + CO2. It catalyses the reaction (Z)-3-ureidoacrylate + H2O = (Z)-3-aminoacrylate + carbamate + H(+). It carries out the reaction (Z)-2-methylureidoacrylate + H2O + H(+) = (Z)-2-methylaminoacrylate + NH4(+) + CO2. Its function is as follows. Hydrolyzes ureidoacrylate to form aminoacrylate and carbamate. The carbamate hydrolyzes spontaneously, thereby releasing one of the nitrogen atoms of the pyrimidine ring as ammonia and one of its carbon atoms as CO2. The sequence is that of Ureidoacrylate amidohydrolase RutB from Escherichia coli O55:H7 (strain CB9615 / EPEC).